The primary structure comprises 271 residues: Putative phosphoenolpyruvate synthase regulatory protein (271 aa).

152-159 (GVSRSGKT) lines the ADP pocket.

It belongs to the pyruvate, phosphate/water dikinase regulatory protein family. PSRP subfamily.

It carries out the reaction [pyruvate, water dikinase] + ADP = [pyruvate, water dikinase]-phosphate + AMP + H(+). The enzyme catalyses [pyruvate, water dikinase]-phosphate + phosphate + H(+) = [pyruvate, water dikinase] + diphosphate. In terms of biological role, bifunctional serine/threonine kinase and phosphorylase involved in the regulation of the phosphoenolpyruvate synthase (PEPS) by catalyzing its phosphorylation/dephosphorylation. In Thiocapsa roseopersicina, this protein is Putative phosphoenolpyruvate synthase regulatory protein.